A 158-amino-acid polypeptide reads, in one-letter code: Cyclic pyranopterin monophosphate synthase (158 aa).

Substrate is bound by residues 74–76 and 112–113; these read MCH and ME. Residue D127 is part of the active site.

It belongs to the MoaC family. As to quaternary structure, homohexamer; trimer of dimers.

The catalysed reaction is (8S)-3',8-cyclo-7,8-dihydroguanosine 5'-triphosphate = cyclic pyranopterin phosphate + diphosphate. It participates in cofactor biosynthesis; molybdopterin biosynthesis. Functionally, catalyzes the conversion of (8S)-3',8-cyclo-7,8-dihydroguanosine 5'-triphosphate to cyclic pyranopterin monophosphate (cPMP). This chain is Cyclic pyranopterin monophosphate synthase, found in Helicobacter pylori (strain Shi470).